We begin with the raw amino-acid sequence, 332 residues long: UDP-galactose/UDP-glucose transporter 1 (332 aa).

8 helical membrane-spanning segments follow: residues 11–31 (ILLL…QGVL), 49–69 (HLAF…YIMI), 80–100 (APWW…AMGI), 112–132 (VLAK…VYGI), 135–155 (TFPE…FALL), 206–226 (IMLG…FGLP), 252–272 (ICGA…GSLA), and 301–317 (WGCV…QIYL). The short motif at 327 to 332 (KKKQKS) is the Di-lysine motif element.

This sequence belongs to the nucleotide-sugar transporter family. UDP-galactose:UMP antiporter (TC 2.A.7.11) subfamily.

The protein resides in the endoplasmic reticulum membrane. In terms of biological role, essential sugar transporter required for the transport of UDP-galactose and UDP-glucose from the cytoplasm into the Golgi and the endoplasmic reticulum, to ensure quality control of protein folding. Essential for pollen development and involved in embryo sac progress. The protein is UDP-galactose/UDP-glucose transporter 1 of Arabidopsis thaliana (Mouse-ear cress).